The following is a 292-amino-acid chain: Ferric aerobactin-binding protein VatD (292 aa).

The signal sequence occupies residues 1 to 12 (MLSAALAFNSYA). The 263-residue stretch at 30 to 292 (KVVALDWVLT…HITGRLTQPQ (263 aa)) folds into the Fe/B12 periplasmic-binding domain. Residues W61, R77, Y118, R185, W213, F215, W269, and F271 each coordinate desferrioxamine B.

The protein belongs to the bacterial solute-binding protein 8 family. As to quaternary structure, the complex is composed of two ATP-binding proteins (VatC), two transmembrane proteins (VatB) and a solute-binding protein (VatD).

The protein resides in the periplasm. In terms of biological role, part of the ABC transporter complex VatCDB involved in the import of iron(3+)-complexed aerobactin, a citrate-hydroxamate siderophore produced by other bacteria. Binds the iron(3+)-aerobactin complex and transfers it to the membrane-bound permease. Functions in the import of iron(3+)-complexed vulnibactin, a catecholate siderophore synthesized by V.vulnificus, in the absence of FatB. The chain is Ferric aerobactin-binding protein VatD from Vibrio vulnificus.